The following is a 153-amino-acid chain: Bacteriohemerythrin (153 aa).

Residues His21, His57, Glu61, His76, His80, His115, and Asp120 each contribute to the Fe cation site.

The protein belongs to the hemerythrin family. In terms of assembly, monomer.

In terms of biological role, oxygen-binding protein. May be involved in a storage mechanism or for delivery to oxygen-requiring enzymes. The oxygen-binding site contains two iron atoms. This chain is Bacteriohemerythrin, found in Stenotrophomonas maltophilia (strain R551-3).